Reading from the N-terminus, the 598-residue chain is ATP-dependent lipid A-core flippase (598 aa).

Residues 1–15 (MSQAYQPDSTKTSAK) show a composition bias toward polar residues. The segment at 1 to 21 (MSQAYQPDSTKTSAKTPVAPT) is disordered. 4 consecutive transmembrane segments (helical) span residues 44–64 (WWAILLTIIGFAINAATEIWI), 85–105 (LFPFIIVMLFFVRGVGSFLGN), 172–192 (VVALMGFLLYSNWRLTLILFV), and 269–289 (INTPAVQLLMAMAMAVVVWLA). The ABC transmembrane type-1 domain maps to 48–329 (LLTIIGFAIN…LTDVNQQLQR (282 aa)). The ABC transporter domain maps to 360-595 (IKLDNVSLVY…HGHYAQMYAR (236 aa)). 393 to 400 (GRSGAGKS) provides a ligand contact to ATP.

This sequence belongs to the ABC transporter superfamily. Lipid exporter (TC 3.A.1.106) family. In terms of assembly, homodimer.

The protein localises to the cell inner membrane. The enzyme catalyses ATP + H2O + lipid A-core oligosaccharideSide 1 = ADP + phosphate + lipid A-core oligosaccharideSide 2.. Involved in lipopolysaccharide (LPS) biosynthesis. Translocates lipid A-core from the inner to the outer leaflet of the inner membrane. Transmembrane domains (TMD) form a pore in the inner membrane and the ATP-binding domain (NBD) is responsible for energy generation. This chain is ATP-dependent lipid A-core flippase, found in Psychrobacter cryohalolentis (strain ATCC BAA-1226 / DSM 17306 / VKM B-2378 / K5).